The chain runs to 453 residues: L-cysteine:1D-myo-inositol 2-amino-2-deoxy-alpha-D-glucopyranoside ligase (453 aa).

A Zn(2+)-binding site is contributed by cysteine 58. L-cysteinyl-5'-AMP contacts are provided by residues 58–61 (CGIT), threonine 73, and 96–98 (NVT). A 'HIGH' region motif is present at residues 60–70 (ITPYDATHMGH). The 'ERGGDP' region motif lies at 221 to 226 (ERGGDP). Tryptophan 262 is a binding site for L-cysteinyl-5'-AMP. Residue cysteine 266 coordinates Zn(2+). 284 to 286 (GND) contacts L-cysteinyl-5'-AMP. Position 291 (histidine 291) interacts with Zn(2+). L-cysteinyl-5'-AMP is bound at residue valine 317. The 'KMSKS' region motif lies at 323 to 327 (KMSKS).

It belongs to the class-I aminoacyl-tRNA synthetase family. MshC subfamily. Monomer. Requires Zn(2+) as cofactor.

The catalysed reaction is 1D-myo-inositol 2-amino-2-deoxy-alpha-D-glucopyranoside + L-cysteine + ATP = 1D-myo-inositol 2-(L-cysteinylamino)-2-deoxy-alpha-D-glucopyranoside + AMP + diphosphate + H(+). Catalyzes the ATP-dependent condensation of GlcN-Ins and L-cysteine to form L-Cys-GlcN-Ins. This chain is L-cysteine:1D-myo-inositol 2-amino-2-deoxy-alpha-D-glucopyranoside ligase, found in Rothia mucilaginosa (strain DY-18) (Stomatococcus mucilaginosus).